A 534-amino-acid chain; its full sequence is Major facilitator-type transporter sor6 (534 aa).

2 N-linked (GlcNAc...) asparagine glycosylation sites follow: Asn29 and Asn36. The next 12 membrane-spanning stretches (helical) occupy residues 66–86 (WFLT…SSAY), 103–123 (LFIT…AVWG), 160–180 (AMVA…LIVL), 182–202 (FLAG…IADL), 209–229 (GLAM…GPIV), 241–261 (WVQG…VIFV), 318–338 (IVLI…MFLG), 354–374 (FGGL…GYAI), 395–415 (LPPA…FAWT), 424–444 (VSIV…LPIV), 456–476 (ASVL…FPLF), and 486–506 (IHWA…FPFF).

Belongs to the major facilitator superfamily. Sugar transporter (TC 2.A.1.1) family.

Its subcellular location is the membrane. Functionally, major facilitator-type transporter; part of the gene cluster that mediates the biosynthesis of sorbicillinoids, a diverse group of yellow secondary metabolites that restrict growth of competing pathogenic fungi but not of bacteria. This chain is Major facilitator-type transporter sor6, found in Hypocrea jecorina (strain QM6a) (Trichoderma reesei).